The following is a 453-amino-acid chain: Probable L-galactonate transporter (453 aa).

The interval 1–23 (MEKENITIDPRSSFTPSSSADIP) is disordered. The Periplasmic portion of the chain corresponds to 1-42 (MEKENITIDPRSSFTPSSSADIPVPPDGLVQRSTRIKRIQTT). The segment covering 10–20 (PRSSFTPSSSA) has biased composition (polar residues). The helical transmembrane segment at 43 to 63 (AMLLLFFAAVINYLDRSSLSV) threads the bilayer. Over 64 to 71 (ANLTIREE) the chain is Cytoplasmic. Residues 72-92 (LGLSATEIGALLSVFSLAYGI) form a helical membrane-spanning segment. Over 93 to 107 (AQLPCGPLLDRKGPR) the chain is Periplasmic. The helical transmembrane segment at 108–128 (LMLGLGMFFWSLFQAMSGMVH) threads the bilayer. The Cytoplasmic portion of the chain corresponds to 129–174 (NFTQFVLVRIGMGIGEAPMNPCGVKVINDWFNIKERGRPMGFFNAA). The helical transmembrane segment at 175 to 195 (STIGVAVSPPILAAMMLVMGW) threads the bilayer. Position 196 (Arg196) is a topological domain, periplasmic. Residues 197 to 217 (GMFITIGVLGIFLAIGWYMLY) traverse the membrane as a helical segment. Residues 218–259 (RNREHVELTAVEQAYLNAGSVNARRDPLSFAEWRSLFRNRTM) lie on the Cytoplasmic side of the membrane. A helical transmembrane segment spans residues 260–280 (WGMMLGFSGINYTAWLYLAWL). Over 281 to 295 (PGYLQTAYNLDLKST) the chain is Periplasmic. Residues 296 to 316 (GLMAAIPFLFGAAGMLVNGYV) form a helical membrane-spanning segment. The Cytoplasmic segment spans residues 317 to 332 (TDWLVKGGMAPIKSRK). The helical transmembrane segment at 333–353 (ICIIAGMFCSAAFTLIVPQAT) threads the bilayer. Over 354 to 359 (TSMTAV) the chain is Periplasmic. The helical transmembrane segment at 360 to 380 (LLIGMALFCIHFAGTSCWGLI) threads the bilayer. Topologically, residues 381 to 394 (HVAVASRMTASVGS) are cytoplasmic. The helical transmembrane segment at 395–415 (IQNFASFICASFAPIITGFIV) threads the bilayer. Over 416 to 422 (DTTHSFR) the chain is Periplasmic. Residues 423 to 443 (LALIICGCVTAAGALAYIFLV) form a helical membrane-spanning segment. The Cytoplasmic segment spans residues 444–453 (RQPINDPRKD).

This sequence belongs to the major facilitator superfamily. Phthalate permease family.

It localises to the cell inner membrane. It carries out the reaction L-galactonate(in) + H(+)(in) = L-galactonate(out) + H(+)(out). Its function is as follows. Probably responsible for the transport of L-galactonate from the periplasm across the inner membrane. Is essential for growth on L-galactonate as the sole carbon source. The polypeptide is Probable L-galactonate transporter (lgoT) (Escherichia coli (strain K12)).